Reading from the N-terminus, the 327-residue chain is 2-methoxy-6-polyprenyl-1,4-benzoquinol methylase, mitochondrial (327 aa).

The N-terminal 42 residues, 1-42 (MAAPGSCALWSYCGRGWSRAMRGCQLLGLRSSWPGDLLSARL), are a transit peptide targeting the mitochondrion. Residues Thr-117, Asp-171, and 199–200 (DA) each bind S-adenosyl-L-methionine.

This sequence belongs to the class I-like SAM-binding methyltransferase superfamily. MenG/UbiE family. Component of a multi-subunit COQ enzyme complex, composed of at least COQ3, COQ4, COQ5, COQ6, COQ7 and COQ9. Interacts with PYURF; the interaction is direct, stabilizes COQ5 protein and associates PYURF with COQ enzyme complex. As to expression, widely expressed, with highest levels in liver, lung, placenta and skeletal muscle.

The protein resides in the mitochondrion inner membrane. It carries out the reaction 2-methoxy-6-(all-trans-decaprenyl)benzene-1,4-diol + S-adenosyl-L-methionine = 5-methoxy-2-methyl-3-(all-trans-decaprenyl)benzene-1,4-diol + S-adenosyl-L-homocysteine + H(+). Its pathway is cofactor biosynthesis; ubiquinone biosynthesis. Functionally, methyltransferase required for the conversion of 2-decaprenyl-6-methoxy-1,4-benzoquinol (DDMQH2) to 2-decaprenyl-3-methyl-6-methoxy-1,4-benzoquinol (DMQH2). The protein is 2-methoxy-6-polyprenyl-1,4-benzoquinol methylase, mitochondrial of Homo sapiens (Human).